A 33-amino-acid chain; its full sequence is Photosystem II reaction center protein Psb30 (33 aa).

A helical membrane pass occupies residues 5 to 25 (LIVQLGSLALITVAGPAIIVL).

The protein belongs to the Psb30/Ycf12 family. PSII is composed of 1 copy each of membrane proteins PsbA, PsbB, PsbC, PsbD, PsbE, PsbF, PsbH, PsbI, PsbJ, PsbK, PsbL, PsbM, PsbT, PsbY, PsbZ, Psb30/Ycf12, peripheral proteins of the oxygen-evolving complex and a large number of cofactors. It forms dimeric complexes.

Its subcellular location is the plastid. The protein resides in the chloroplast thylakoid membrane. In terms of biological role, a core subunit of photosystem II (PSII), probably helps stabilize the reaction center. In Euglena stellata, this protein is Photosystem II reaction center protein Psb30.